The sequence spans 98 residues: NADH-ubiquinone oxidoreductase chain 4L (98 aa).

3 consecutive transmembrane segments (helical) span residues 1-21 (MSLV…GLLM), 29-49 (ALLC…LTIL), and 61-81 (IILL…LVTI).

Belongs to the complex I subunit 4L family. As to quaternary structure, core subunit of respiratory chain NADH dehydrogenase (Complex I) which is composed of 45 different subunits.

It localises to the mitochondrion inner membrane. The enzyme catalyses a ubiquinone + NADH + 5 H(+)(in) = a ubiquinol + NAD(+) + 4 H(+)(out). Its function is as follows. Core subunit of the mitochondrial membrane respiratory chain NADH dehydrogenase (Complex I) which catalyzes electron transfer from NADH through the respiratory chain, using ubiquinone as an electron acceptor. Part of the enzyme membrane arm which is embedded in the lipid bilayer and involved in proton translocation. The sequence is that of NADH-ubiquinone oxidoreductase chain 4L (MT-ND4L) from Ziphius cavirostris (Cuvier's beaked whale).